Here is a 743-residue protein sequence, read N- to C-terminus: Dolichyl-phosphooligosaccharide-protein glycotransferase 2 (743 aa).

Over 1-7 (MKIDKRL) the chain is Cytoplasmic. A helical membrane pass occupies residues 8–28 (MVIVAIATLFRMIPFRLKYLV). A DXD motif 1 motif is present at residues 29 to 31 (GSD). The Extracellular segment spans residues 29-91 (GSDPYFHLAY…FSFLGISLYT (63 aa)). Asp-31 serves as a coordination point for Mn(2+). Residues 92–112 (AFRVTPVIFGVLTVVFFYLSL) form a helical membrane-spanning segment. At 113–119 (KKLYNRD) the chain is on the cytoplasmic side. The chain crosses the membrane as a helical span at residues 120-140 (VAFIVGLFLGVNYGHIFRSMA). Over 141–144 (NYYR) the chain is Extracellular. The Mn(2+) site is built by Arg-144 and Asp-146. The DXD motif 2 motif lies at 144–146 (RGD). Residues 145–165 (GDNYMLFWYSVALLGIALGLK) traverse the membrane as a helical segment. At 166 to 170 (TRSKY) the chain is on the cytoplasmic side. A run of 2 helical transmembrane segments spans residues 171–191 (RYLF…FWQA) and 192–212 (YYPI…YAYL). At 213-216 (KSPK) the chain is on the cytoplasmic side. Residues 217 to 237 (LFLDSILIVLSTGLGVLIANI) form a helical membrane-spanning segment. The Extracellular segment spans residues 238–272 (LGDKVGYGMLGYTDWMGKKVAETFGLEFGFIKDAY). The helical transmembrane segment at 273-293 (LLIHVKYLLPLSLVFLGFLII) threads the bilayer. Topologically, residues 294–302 (TKKLNPKIK) are cytoplasmic. Residues 303 to 323 (VGVLVGGSILAFIVMLVKFPA) traverse the membrane as a helical segment. The Extracellular segment spans residues 324-345 (LKDLSTGFGTFREVPISETLPP). Residues 333 to 336 (TFRE) carry the TIXE motif motif. Residues 346 to 366 (TLDDLWRAYNIAIFLAALYIL) traverse the membrane as a helical segment. Over 367-373 (RLRKIRS) the chain is Cytoplasmic. The chain crosses the membrane as a helical span at residues 374–391 (GDAILLGYVITSLWMLRY). Residues 392-394 (WTR) lie on the Extracellular side of the membrane. Position 394 (Arg-394) interacts with a glycophospholipid. Residues 395 to 415 (FLFTAAPAVAFLSGIGVYELT) traverse the membrane as a helical segment. Over 416–424 (RRIKENKIR) the chain is Cytoplasmic. The helical transmembrane segment at 425-445 (ITSLGVVILLSSAFSLGEVYS) threads the bilayer. Residues 446–743 (VKPFMNENWE…LDRGIVRVKN (298 aa)) are Extracellular-facing. An interacts with target acceptor peptide in protein substrate region spans residues 474 to 476 (WWD). The WWDYG motif signature appears at 474–478 (WWDWG). The DK motif signature appears at 526–533 (DILKFEAI).

The protein belongs to the STT3 family. It depends on Mn(2+) as a cofactor. Mg(2+) serves as cofactor.

The protein resides in the cell membrane. It carries out the reaction an archaeal dolichyl phosphooligosaccharide + [protein]-L-asparagine = an archaeal dolichyl phosphate + a glycoprotein with the oligosaccharide chain attached by N-beta-D-glycosyl linkage to a protein L-asparagine.. The protein operates within protein modification; protein glycosylation. In terms of biological role, oligosaccharyl transferase (OST) that catalyzes the initial transfer of a defined glycan (ManNAcXyl(2)GlcAMan(2)GalNAc in P.furiosus) from the lipid carrier dolichol-monophosphate to an asparagine residue within an Asn-X-Ser/Thr consensus motif in nascent polypeptide chains, the first step in protein N-glycosylation. The sequence is that of Dolichyl-phosphooligosaccharide-protein glycotransferase 2 (aglB2) from Pyrococcus furiosus (strain ATCC 43587 / DSM 3638 / JCM 8422 / Vc1).